Reading from the N-terminus, the 349-residue chain is AA9 family lytic polysaccharide monooxygenase C (349 aa).

An N-terminal signal peptide occupies residues 1–19 (MKSTFGLLALAAAAKLVSA). Cu(2+)-binding residues include His20 and His102. Cys62 and Cys183 are disulfide-bonded. O2 is bound at residue His169. Residue Tyr180 participates in Cu(2+) binding. The disordered stretch occupies residues 233–304 (DGSSSGSSGS…SGSNSGSDSC (72 aa)). 2 stretches are compositionally biased toward low complexity: residues 234–262 (GSSS…AAPT) and 269–304 (TSAT…SDSC). Positions 311-347 (GSVKIYGQCGGQNYSGPTSCEAGLICKEWNPYYHQCV) constitute a CBM1 domain. Intrachain disulfides connect Cys319-Cys336 and Cys330-Cys346. A glycan (N-linked (GlcNAc...) asparagine) is linked at Asn323.

It belongs to the polysaccharide monooxygenase AA9 family. Requires Cu(2+) as cofactor.

The protein resides in the secreted. The enzyme catalyses [(1-&gt;4)-beta-D-glucosyl]n+m + reduced acceptor + O2 = 4-dehydro-beta-D-glucosyl-[(1-&gt;4)-beta-D-glucosyl]n-1 + [(1-&gt;4)-beta-D-glucosyl]m + acceptor + H2O.. Functionally, lytic polysaccharide monooxygenase (LPMO) that depolymerizes crystalline and amorphous polysaccharides via the oxidation of scissile alpha- or beta-(1-4)-glycosidic bonds, yielding C4 oxidation products. Catalysis by LPMOs requires the reduction of the active-site copper from Cu(II) to Cu(I) by a reducing agent and H(2)O(2) or O(2) as a cosubstrate. Active on cellulose and cello-oligosaccharides, as well as plant cell wall-derived hemicellulosic polysaccharides. Also active on cello-oligosaccharides such as cellohexaose, cellopentaose or cellotetraose. This chain is AA9 family lytic polysaccharide monooxygenase C, found in Aspergillus fumigatus (strain ATCC MYA-4609 / CBS 101355 / FGSC A1100 / Af293) (Neosartorya fumigata).